The chain runs to 361 residues: MTSSYHQQLQAKIDRITTQFSEFTPPTLEVFESPEQHFRMRAEFRIWHTENDMFYAMFERNDDGKQKTVVRIDEFPIADKSINDLMPLLLAELKANSLLSQRLFEVDFLATLSGEMLVTLIYHRKLNQEWEQEAKALAEKLNIKIMGRSRGQKIVIGDDFVVEEFELLNRSFKYKQIESSFTQPNAQVCKKMLQWACDAAEGSKKHLLELYCGNGNFTLPLSLKFERVLATELAKSSVYAAQWNIEQNQIDNIQVARLSAEEFTQAYQGEREFRRLQEADIDIQSYDFDTVFVDPPRAGIDDETLKLLQSFERIIYISCNPNTLYENLKTLTQTHRVTKFALFDQFPYTHHVESGVLLEKI.

S-adenosyl-L-methionine-binding residues include Gln183, Tyr211, Asn216, Glu232, and Asp294. Residue Cys319 is the Nucleophile of the active site. Residue Glu353 is the Proton acceptor of the active site.

Belongs to the class I-like SAM-binding methyltransferase superfamily. RNA M5U methyltransferase family. TrmA subfamily.

It carries out the reaction uridine(54) in tRNA + S-adenosyl-L-methionine = 5-methyluridine(54) in tRNA + S-adenosyl-L-homocysteine + H(+). It catalyses the reaction uridine(341) in tmRNA + S-adenosyl-L-methionine = 5-methyluridine(341) in tmRNA + S-adenosyl-L-homocysteine + H(+). Its function is as follows. Dual-specificity methyltransferase that catalyzes the formation of 5-methyluridine at position 54 (m5U54) in all tRNAs, and that of position 341 (m5U341) in tmRNA (transfer-mRNA). This Acinetobacter baumannii (strain ACICU) protein is tRNA/tmRNA (uracil-C(5))-methyltransferase.